An 813-amino-acid polypeptide reads, in one-letter code: MRRALRLLPLPLSIAICLPAMAADKPLNWGLCPAVDPLPGFDGAPAADPKAAEMRQQLPTDIEGDQLSGTSTTPQYQGNVALKRGDQFLGADNLRMDTETGNYIAEGNVRYQDTSFRMVADRAEGNQDTDTHKVTNIQYQLVERRGNGDAESVDLQGQVGQMHRSTYTTCDPSQPIWRVRAPEIDVDNEEGFGTARNAVLQIGKVPVLYFPWFKFPIDDRRQTGLLFPQFGLSGRNGFDYLQPIYLNLAPNYDATLLPRYMSKRGFMFGTEFRYLYEGGRGEVTGNYLPNDKLRDKDRGSVFYSGYHNVNTHWQARSSISWVSDTRYVEDFTSRLNGMGSASSLQSTVGIYGTGETWTAGLMADRWQLTDYTLDEQALPYNRQPRAYFTWEKPFGIFEAGVYAEAVRFTHDDSYFVQPPSPSAPGETNNRDDNDEYVRTNIRNKEYGSGARLDVKPYISMPLSGAAWFLTPTVAWRYTAYQLDSTLANTAPLTGNRTPSRSLPIASLDAGLYFDRETSLFGTNYLNTLEPRMYYLYVPYRDQDDLPVFDTRPFTFSYGQLFRDTRYTGADRQNDANQLTLAVTSRWLRQDDGREKLSLSAGQILYFSDSLVTINNSNNSAAGSEQTVEQGKSAWVADANYMINDRWSMGATYQWNPNSRKEDLASLRTRYLLNNDGIINLAYRYRRNLTDNSDQLKQADFSFLYPINPSWSAVGRYYYSLLDRKPLEIIGGVQWDSCCLAVRGLVRRFVRNRDGEMDNSIQIEFVLKGLSSFGQNTDRTLRRAILGYYRDDLYLVPPSNTTTNPDDYDPNLIP.

Positions Met-1–Ala-22 are cleaved as a signal peptide.

The protein belongs to the LptD family. In terms of assembly, component of the lipopolysaccharide transport and assembly complex. Interacts with LptE and LptA.

The protein resides in the cell outer membrane. Its function is as follows. Together with LptE, is involved in the assembly of lipopolysaccharide (LPS) at the surface of the outer membrane. The chain is LPS-assembly protein LptD from Xanthomonas axonopodis pv. citri (strain 306).